The following is a 201-amino-acid chain: Glutathione peroxidase 1 (201 aa).

Ser32 carries the post-translational modification Phosphoserine. The active site involves Sec47. Residue Sec47 is a non-standard amino acid, selenocysteine. 3 positions are modified to N6-acetyllysine; alternate: Lys86, Lys112, and Lys146. N6-succinyllysine; alternate occurs at positions 86, 112, and 146. Phosphoserine occurs at positions 195 and 199.

This sequence belongs to the glutathione peroxidase family. In terms of assembly, homotetramer. Interacts with MIEN1. During periods of oxidative stress, Sec-47 may react with a superoxide radical, irreversibly lose hydroselenide and be converted to dehydroalanine.

It is found in the cytoplasm. Its subcellular location is the mitochondrion. It carries out the reaction 2 glutathione + H2O2 = glutathione disulfide + 2 H2O. The catalysed reaction is a hydroperoxy polyunsaturated fatty acid + 2 glutathione = a hydroxy polyunsaturated fatty acid + glutathione disulfide + H2O. It catalyses the reaction tert-butyl hydroperoxide + 2 glutathione = tert-butanol + glutathione disulfide + H2O. The enzyme catalyses cumene hydroperoxide + 2 glutathione = 2-phenylpropan-2-ol + glutathione disulfide + H2O. It carries out the reaction (13S)-hydroperoxy-(9Z,11E)-octadecadienoate + 2 glutathione = (13S)-hydroxy-(9Z,11E)-octadecadienoate + glutathione disulfide + H2O. The catalysed reaction is (9S)-hydroperoxy-(10E,12Z)-octadecadienoate + 2 glutathione = (9S)-hydroxy-(10E,12Z)-octadecadienoate + glutathione disulfide + H2O. It catalyses the reaction (5S)-hydroperoxy-(6E,8Z,11Z,14Z)-eicosatetraenoate + 2 glutathione = (5S)-hydroxy-(6E,8Z,11Z,14Z)-eicosatetraenoate + glutathione disulfide + H2O. The enzyme catalyses (12S)-hydroperoxy-(5Z,8Z,10E,14Z)-eicosatetraenoate + 2 glutathione = (12S)-hydroxy-(5Z,8Z,10E,14Z)-eicosatetraenoate + glutathione disulfide + H2O. It carries out the reaction (12R)-hydroperoxy-(5Z,8Z,10E,14Z)-eicosatetraenoate + 2 glutathione = (12R)-hydroxy-(5Z,8Z,10E,14Z)-eicosatetraenoate + glutathione disulfide + H2O. The catalysed reaction is (15S)-hydroperoxy-(5Z,8Z,11Z,13E)-eicosatetraenoate + 2 glutathione = (15S)-hydroxy-(5Z,8Z,11Z,13E)-eicosatetraenoate + glutathione disulfide + H2O. It catalyses the reaction (5S)-hydroperoxy-(6E,8Z,11Z,14Z,17Z)-eicosapentaenoate + 2 glutathione = (5S)-hydroxy-(6E,8Z,11Z,14Z,17Z)-eicosapentaenoate + glutathione disulfide + H2O. The enzyme catalyses (12S)-hydroperoxy-(5Z,8Z,10E,14Z,17Z)-eicosapentaenoate + 2 glutathione = (12S)-hydroxy-(5Z,8Z,10E,14Z,17Z)-eicosapentaenoate + glutathione disulfide + H2O. It carries out the reaction (15S)-hydroperoxy-(5Z,8Z,11Z,13E,17Z)-eicosapentaenoate + 2 glutathione = (15S)-hydroxy-(5Z,8Z,11Z,13E,17Z)-eicosapentaenoate + glutathione disulfide + H2O. The catalysed reaction is (15S)-hydroperoxy-(11Z,13E)-eicosadienoate + 2 glutathione = (15S)-hydroxy-(11Z,13E)-eicosadienoate + glutathione disulfide + H2O. It catalyses the reaction (17S)-hydroperoxy-(4Z,7Z,10Z,13Z,15E,19Z)-docosahexaenoate + 2 glutathione = (17S)-hydroxy-(4Z,7Z,10Z,13Z,15E,19Z)-docosahexaenoate + glutathione disulfide + H2O. Its function is as follows. Catalyzes the reduction of hydroperoxides in a glutathione-dependent manner thus regulating cellular redox homeostasis. Can reduce small soluble hydroperoxides such as H2O2, cumene hydroperoxide and tert-butyl hydroperoxide, as well as several fatty acid-derived hydroperoxides. In platelets catalyzes the reduction of 12-hydroperoxyeicosatetraenoic acid, the primary product of the arachidonate 12-lipoxygenase pathway. The chain is Glutathione peroxidase 1 (GPX1) from Pongo pygmaeus (Bornean orangutan).